The sequence spans 631 residues: Fatty acid ABC transporter ATP-binding/permease protein (631 aa).

A compositionally biased stretch (low complexity) spans 1-11; it reads MTAPPGARPRA. The interval 1-20 is disordered; sequence MTAPPGARPRAASPPPNMRS. Transmembrane regions (helical) follow at residues 42–62, 123–143, and 205–225; these read IAVITLGIAGTTIGVIVPRIL, LALALALYLAAALMIWAQARL, and ILTMVAVLAMMVSISGLLALI. In terms of domain architecture, ABC transmembrane type-1 spans 42–365; the sequence is IAVITLGIAG…LAGMYNALQS (324 aa). An ABC transporter domain is found at 397–631; the sequence is VEFEHVNFAY…RGVYYQMTRA (235 aa). 430–437 is a binding site for ATP; it reads GPTGAGKT.

Belongs to the ABC transporter superfamily. Lipid exporter (TC 3.A.1.106) family.

Its subcellular location is the cell inner membrane. In terms of biological role, ABC transporter involved in fatty acid import. Transmembrane domains (TMD) form a pore in the membrane and the ATP-binding domain (NBD) is responsible for energy generation. The chain is Fatty acid ABC transporter ATP-binding/permease protein from Mycobacterium bovis (strain ATCC BAA-935 / AF2122/97).